Reading from the N-terminus, the 294-residue chain is Protein huluwa (294 aa).

Topologically, residues 1–23 are extracellular; sequence MSQLGSAVPSSNLPEGLPVSSLA. The chain crosses the membrane as a helical span at residues 24–44; the sequence is LLILVLIPCVLLLLLLNCLFV. Topologically, residues 45–294 are cytoplasmic; the sequence is GYKLFRMTRR…PPITTKQYWV (250 aa). Residues 154–175 form a disordered region; sequence SDSDMERVNTVPPNSPVLRVTP. Positions 164–169 match the VPPNSP motif motif; sequence VPPNSP. Residues 184 to 190 carry the SLRRSST motif motif; that stretch reads SLRRSST.

It belongs to the huluwa family. In terms of assembly, interacts with axin1; leading to promote the tankyrase-mediated degradation of axin. Interacts with axin2; leading to promote the tankyrase-mediated degradation of axin.

Its subcellular location is the cell membrane. Its function is as follows. Key maternal determinant of the dorsal organizer and body axis formation in vertebrates that acts by promoting stabilization of beta-catenin (ctnnb1). Localizes on the plasma membrane of the future dorsal blastomeres in early blastulas and binds to and promotes the tankyrase-mediated degradation of axin (axin1 and axin2). Axin degradation results in stabilization and nuclear translocation of beta-catenin (ctnnb1) for activating organizer-specific target gene expression. The polypeptide is Protein huluwa (Danio rerio (Zebrafish)).